Reading from the N-terminus, the 373-residue chain is Putative F-box/kelch-repeat protein At2g41360 (373 aa).

Positions 8–54 constitute an F-box domain; the sequence is WSSLSCLPDEMVLNCLARVPRRYYENISCVSVRLRSLVRTPELYRMR. Kelch repeat units lie at residues 116–162 and 163–208; these read EIYF…VFDG and KIHV…MVSS.

The chain is Putative F-box/kelch-repeat protein At2g41360 from Arabidopsis thaliana (Mouse-ear cress).